Reading from the N-terminus, the 323-residue chain is Mediator of RNA polymerase II transcription subunit 4 (323 aa).

Positions 1–36 (MLPFKKADSPFKSNPVSRVGSSTRLNQLGNIKSNPT) are disordered. A compositionally biased stretch (polar residues) spans 11-36 (FKSNPVSRVGSSTRLNQLGNIKSNPT). Residues 79–167 (MVQKVNEYER…VSYRNELKKL (89 aa)) adopt a coiled-coil conformation. Basic and acidic residues-rich tracts occupy residues 241 to 262 (HELG…KVDH) and 282 to 303 (DEQR…KEEQ). The tract at residues 241–323 (HELGETDKEN…LFDPDDEYSD (83 aa)) is disordered.

The protein belongs to the Mediator complex subunit 4 family. In terms of assembly, component of the Mediator complex.

Its subcellular location is the nucleus. Functionally, component of the Mediator complex, a coactivator involved in the regulated transcription of nearly all RNA polymerase II-dependent genes. Mediator functions as a bridge to convey information from gene-specific regulatory proteins to the basal RNA polymerase II transcription machinery. Mediator is recruited to promoters by direct interactions with regulatory proteins and serves as a scaffold for the assembly of a functional preinitiation complex with RNA polymerase II and the general transcription factors. The sequence is that of Mediator of RNA polymerase II transcription subunit 4 (MED4) from Candida albicans (strain SC5314 / ATCC MYA-2876) (Yeast).